A 323-amino-acid chain; its full sequence is Glyoxylate/hydroxypyruvate reductase B (323 aa).

Residues Arg-237 and Glu-266 contribute to the active site. The active-site Proton donor is the His-285.

It belongs to the D-isomer specific 2-hydroxyacid dehydrogenase family. GhrB subfamily. Homodimer.

The protein localises to the cytoplasm. It carries out the reaction glycolate + NADP(+) = glyoxylate + NADPH + H(+). The enzyme catalyses (R)-glycerate + NAD(+) = 3-hydroxypyruvate + NADH + H(+). It catalyses the reaction (R)-glycerate + NADP(+) = 3-hydroxypyruvate + NADPH + H(+). In terms of biological role, catalyzes the NADPH-dependent reduction of glyoxylate and hydroxypyruvate into glycolate and glycerate, respectively. This is Glyoxylate/hydroxypyruvate reductase B from Klebsiella pneumoniae (strain 342).